The chain runs to 106 residues: Transcription initiation factor IIA subunit 2 (106 aa).

It belongs to the TFIIA subunit 2 family. As to quaternary structure, TFIIA is a heterodimer of the large unprocessed subunit 1 and a small subunit gamma. It was originally believed to be a heterotrimer of an alpha, a beta and a gamma subunit.

The protein localises to the nucleus. In terms of biological role, TFIIA is a component of the transcription machinery of RNA polymerase II and plays an important role in transcriptional activation. TFIIA in a complex with TBP mediates transcriptional activity. Protein involved in the resistance to X.oryzae. The chain is Transcription initiation factor IIA subunit 2 (TFIIAy) from Oryza sativa subsp. indica (Rice).